We begin with the raw amino-acid sequence, 349 residues long: Estrogen receptor (349 aa).

The segment at residues 1-5 (YEVGM) is a DNA-binding region (nuclear receptor). The interval 1–38 (YEVGMMKGGIRKDRRGGRMLKHKRQREENDSRNAGALT) is disordered. Residues 12-24 (KDRRGGRMLKHKR) are compositionally biased toward basic residues. The region spanning 65–301 (TADQMVSALL…DLLLEMLDAH (237 aa)) is the NR LBD domain. The tract at residues 306–327 (PAAKGSPPSEDDPLNQLAVPSP) is disordered.

The protein belongs to the nuclear hormone receptor family. NR3 subfamily. As to quaternary structure, binds DNA as a homodimer. Can form a heterodimer with ER-beta.

It localises to the nucleus. Its function is as follows. The steroid hormones and their receptors are involved in the regulation of eukaryotic gene expression and affect cellular proliferation and differentiation in target tissues. The sequence is that of Estrogen receptor (ESR1) from Anolis carolinensis (Green anole).